Here is a 267-residue protein sequence, read N- to C-terminus: Hydroxyethylthiazole kinase (267 aa).

Met46 contributes to the substrate binding site. Arg122 and Ser168 together coordinate ATP. Residue Gly195 coordinates substrate.

The protein belongs to the Thz kinase family. Requires Mg(2+) as cofactor.

It catalyses the reaction 5-(2-hydroxyethyl)-4-methylthiazole + ATP = 4-methyl-5-(2-phosphooxyethyl)-thiazole + ADP + H(+). The protein operates within cofactor biosynthesis; thiamine diphosphate biosynthesis; 4-methyl-5-(2-phosphoethyl)-thiazole from 5-(2-hydroxyethyl)-4-methylthiazole: step 1/1. In terms of biological role, catalyzes the phosphorylation of the hydroxyl group of 4-methyl-5-beta-hydroxyethylthiazole (THZ). This is Hydroxyethylthiazole kinase from Nitratidesulfovibrio vulgaris (strain DP4) (Desulfovibrio vulgaris).